The sequence spans 219 residues: uncharacterized protein (219 aa).

A helical membrane pass occupies residues 28 to 50; it reads IVSSLIAGGYALFVSAFTSYVYT. A coiled-coil region spans residues 155 to 218; it reads EILRESLSEI…EEIEKELEFF (64 aa).

It localises to the membrane. This is an uncharacterized protein from Aquifex aeolicus (strain VF5).